Reading from the N-terminus, the 588-residue chain is Acid beta-fructofuranosidase 1, vacuolar (588 aa).

The Cytoplasmic segment spans residues 1–31; it reads MDTSTSAYAPLPGEDPLFSGHPPASLRRSWK. A propeptide spans 1–115 (removed in mature form); the sequence is MDTSTSAYAP…LSYNWTNAMF (115 aa). The helical; Signal-anchor for type II membrane protein transmembrane segment at 32 to 52 threads the bilayer; sequence GFAVIFASVLFLLSLVGLIIH. Residues 53–588 are Lumenal-facing; sequence QGPQQPPDVM…LRALRKEVGR (536 aa). The tract at residues 57–86 is disordered; the sequence is QPPDVMPDKQDEHHHPQSTTPASETTASWE. The span at 62 to 71 shows a compositional bias: basic and acidic residues; the sequence is MPDKQDEHHH. A compositionally biased stretch (polar residues) spans 73 to 84; sequence QSTTPASETTAS. Substrate-binding positions include 130–133, Gln-149, and Trp-157; that span reads WMND. The active site involves Asp-133. Asn-159 carries an N-linked (GlcNAc...) asparagine glycan. Position 192-193 (192-193) interacts with substrate; that stretch reads WS. A glycan (N-linked (GlcNAc...) asparagine) is linked at Asn-226. Residues 256-257, Glu-311, and Asp-344 contribute to the substrate site; that span reads RD. The cysteines at positions 499 and 545 are disulfide-linked.

It belongs to the glycosyl hydrolase 32 family. In terms of assembly, monomer. May be present in two forms, a 70 kDa monomer and a heterodimer of the 30 kDa and 38 kDa subunits. The ratio of the levels of the two forms within cells appears to be regulated developmentally. Glycosylated. As to expression, expressed in buds, stems, roots and leaves. Expressed in the epidermal cells of young leaves and of primordial leaves.

It is found in the membrane. The protein localises to the vacuole lumen. It carries out the reaction Hydrolysis of terminal non-reducing beta-D-fructofuranoside residues in beta-D-fructofuranosides.. Acidic vacuolar invertase involved in light-induced bud burst. The sequence is that of Acid beta-fructofuranosidase 1, vacuolar from Rosa hybrid cultivar.